The chain runs to 203 residues: Molybdenum cofactor guanylyltransferase (203 aa).

Residues 12 to 14, K25, N53, D71, and D101 contribute to the GTP site; that span reads LAG. Residue D101 participates in Mg(2+) binding.

Belongs to the MobA family. As to quaternary structure, monomer. Requires Mg(2+) as cofactor.

Its subcellular location is the cytoplasm. The enzyme catalyses Mo-molybdopterin + GTP + H(+) = Mo-molybdopterin guanine dinucleotide + diphosphate. Transfers a GMP moiety from GTP to Mo-molybdopterin (Mo-MPT) cofactor (Moco or molybdenum cofactor) to form Mo-molybdopterin guanine dinucleotide (Mo-MGD) cofactor. The protein is Molybdenum cofactor guanylyltransferase of Cupriavidus metallidurans (strain ATCC 43123 / DSM 2839 / NBRC 102507 / CH34) (Ralstonia metallidurans).